Here is a 251-residue protein sequence, read N- to C-terminus: MNILLTNDDGIHASGLRAIYNELVKLGHNVFPFAPTVERSGASNSVSLNVPLTTQDVYDGDFKGTAINGTPVDCVKVGLAKLHENPPDLIISGINAGHNVGTDILYSGTVAAAMEGCVAGIPSIAFSRPREEVDPTQSYAEHAANLLKKIDFSLVPKGQILNINYPSISIKKTLGIKVCAMSTQGWEHKLHKKKDDNGKPYWFISPYIPYSHGISQTDVFFLLEGWITITPLMFNMTAQTTLSNLEQHSFT.

A divalent metal cation contacts are provided by aspartate 8, aspartate 9, serine 40, and asparagine 95.

Belongs to the SurE nucleotidase family. It depends on a divalent metal cation as a cofactor.

It is found in the cytoplasm. The catalysed reaction is a ribonucleoside 5'-phosphate + H2O = a ribonucleoside + phosphate. Its function is as follows. Nucleotidase that shows phosphatase activity on nucleoside 5'-monophosphates. The polypeptide is 5'-nucleotidase SurE (Lawsonia intracellularis (strain PHE/MN1-00)).